The primary structure comprises 229 residues: Triosephosphate isomerase (229 aa).

9 to 11 (NLK) contributes to the substrate binding site. Catalysis depends on His-93, which acts as the Electrophile. Glu-141 acts as the Proton acceptor in catalysis. Substrate is bound by residues Ile-146, Gly-181, and 202-203 (AS).

This sequence belongs to the triosephosphate isomerase family. In terms of assembly, homotetramer; dimer of dimers.

It localises to the cytoplasm. It carries out the reaction D-glyceraldehyde 3-phosphate = dihydroxyacetone phosphate. It participates in carbohydrate biosynthesis; gluconeogenesis. It functions in the pathway carbohydrate degradation; glycolysis; D-glyceraldehyde 3-phosphate from glycerone phosphate: step 1/1. Functionally, involved in the gluconeogenesis. Catalyzes stereospecifically the conversion of dihydroxyacetone phosphate (DHAP) to D-glyceraldehyde-3-phosphate (G3P). This is Triosephosphate isomerase from Pyrobaculum islandicum (strain DSM 4184 / JCM 9189 / GEO3).